Reading from the N-terminus, the 560-residue chain is NAD-dependent malic enzyme (560 aa).

Residue Tyr100 is the Proton donor of the active site. Arg153 lines the NAD(+) pocket. Catalysis depends on Lys171, which acts as the Proton acceptor. Glu242, Asp243, and Asp266 together coordinate a divalent metal cation. Residues Asp266 and Asn413 each coordinate NAD(+).

It belongs to the malic enzymes family. As to quaternary structure, homotetramer. Requires Mg(2+) as cofactor. It depends on Mn(2+) as a cofactor.

It catalyses the reaction (S)-malate + NAD(+) = pyruvate + CO2 + NADH. The enzyme catalyses oxaloacetate + H(+) = pyruvate + CO2. The sequence is that of NAD-dependent malic enzyme from Psychrobacter cryohalolentis (strain ATCC BAA-1226 / DSM 17306 / VKM B-2378 / K5).